The chain runs to 59 residues: Cortexin domain containing 2 (59 aa).

The helical transmembrane segment at 20–40 (FAIAFVVLVFVFLIVMVFRCV) threads the bilayer.

The protein resides in the membrane. The chain is Cortexin domain containing 2 from Mus musculus (Mouse).